A 426-amino-acid chain; its full sequence is Tryptophan--tRNA ligase (426 aa).

Residues 66 to 74 (PSGEMHLGN) carry the 'HIGH' region motif. The short motif at 314–318 (KMSSS) is the 'KMSKS' region element.

Belongs to the class-I aminoacyl-tRNA synthetase family.

It localises to the cytoplasm. It carries out the reaction tRNA(Trp) + L-tryptophan + ATP = L-tryptophyl-tRNA(Trp) + AMP + diphosphate + H(+). The sequence is that of Tryptophan--tRNA ligase from Thermoplasma volcanium (strain ATCC 51530 / DSM 4299 / JCM 9571 / NBRC 15438 / GSS1).